Reading from the N-terminus, the 411-residue chain is Multidrug resistance protein MdtA (411 aa).

Residues 1–19 (MNAKRIRGLLILAAVIAIA) form the signal peptide. The segment covering 31–49 (PAAPGTSEQHAARTSHSEN) has biased composition (polar residues). The disordered stretch occupies residues 31–58 (PAAPGTSEQHAARTSHSENSGSGGGRRA).

The protein belongs to the membrane fusion protein (MFP) (TC 8.A.1) family. As to quaternary structure, part of a tripartite efflux system composed of MdtA, MdtB and MdtC.

The protein localises to the cell inner membrane. The chain is Multidrug resistance protein MdtA from Pectobacterium atrosepticum (strain SCRI 1043 / ATCC BAA-672) (Erwinia carotovora subsp. atroseptica).